Here is a 466-residue protein sequence, read N- to C-terminus: IQ domain-containing protein C (466 aa).

The 30-residue stretch at 6–35 (LVRKVSALQACVRGFLVRRQFQSLRAEYEA) folds into the IQ domain. Disordered regions lie at residues 105–157 (KSGE…PHSQ), 214–233 (EQAC…DQSY), 238–310 (TGEL…QTFG), and 394–466 (VLDL…EPPG). A compositionally biased stretch (basic and acidic residues) spans 132 to 153 (PSQEKTRDTTRMENPEATDQRL). Polar residues predominate over residues 282 to 293 (GPPSSIPSNSQA). A compositionally biased stretch (basic and acidic residues) spans 297-306 (RLTKGPDDGR). At serine 438 the chain carries Phosphoserine.

In Homo sapiens (Human), this protein is IQ domain-containing protein C (IQCC).